The following is a 399-amino-acid chain: Dual-specificity RNA methyltransferase RlmN (399 aa).

The active-site Proton acceptor is the E120. The 242-residue stretch at 126-367 (EEGRGTLCVS…SPVRTPRGRD (242 aa)) folds into the Radical SAM core domain. The cysteines at positions 133 and 372 are disulfide-linked. [4Fe-4S] cluster is bound by residues C140, C144, and C147. Residues 198–199 (GE), S230, 252–254 (SLH), and N329 contribute to the S-adenosyl-L-methionine site. The active-site S-methylcysteine intermediate is C372.

This sequence belongs to the radical SAM superfamily. RlmN family. Requires [4Fe-4S] cluster as cofactor.

It is found in the cytoplasm. The catalysed reaction is adenosine(2503) in 23S rRNA + 2 reduced [2Fe-2S]-[ferredoxin] + 2 S-adenosyl-L-methionine = 2-methyladenosine(2503) in 23S rRNA + 5'-deoxyadenosine + L-methionine + 2 oxidized [2Fe-2S]-[ferredoxin] + S-adenosyl-L-homocysteine. It carries out the reaction adenosine(37) in tRNA + 2 reduced [2Fe-2S]-[ferredoxin] + 2 S-adenosyl-L-methionine = 2-methyladenosine(37) in tRNA + 5'-deoxyadenosine + L-methionine + 2 oxidized [2Fe-2S]-[ferredoxin] + S-adenosyl-L-homocysteine. Functionally, specifically methylates position 2 of adenine 2503 in 23S rRNA and position 2 of adenine 37 in tRNAs. m2A2503 modification seems to play a crucial role in the proofreading step occurring at the peptidyl transferase center and thus would serve to optimize ribosomal fidelity. The chain is Dual-specificity RNA methyltransferase RlmN from Parvibaculum lavamentivorans (strain DS-1 / DSM 13023 / NCIMB 13966).